Consider the following 91-residue polypeptide: UPF0250 protein NGK_1021 (91 aa).

The protein belongs to the UPF0250 family.

The polypeptide is UPF0250 protein NGK_1021 (Neisseria gonorrhoeae (strain NCCP11945)).